The sequence spans 139 residues: Immunogenic miracidial antigen 8I' (139 aa).

Residues Ile61 to His139 form a disordered region. Acidic residues predominate over residues Gly64 to Asp85. The span at Ser90–Gln103 shows a compositional bias: polar residues.

This sequence belongs to the immunogenic miracidial antigen family.

This Schistosoma japonicum (Blood fluke) protein is Immunogenic miracidial antigen 8I' (8I').